Here is a 373-residue protein sequence, read N- to C-terminus: Histone-lysine N-methyltransferase SETD7 (373 aa).

The tract at residues 1–20 (MDSDDDNMEEVVEGPLDEDD) is disordered. MORN repeat units follow at residues 36–58 (FEGHFVHGEKNGKGKFFFFDGST), 59–81 (LEGFYVDDALQGQGVYTYEDGGA), and 106–128 (FRGRYKDNIRYGMCWVYYPDGAC). Residues 214–336 (QRVYVGQSLI…KDEELTVAYG (123 aa)) enclose the SET domain. S-adenosyl-L-methionine is bound by residues 226-228 (AGE), Asn-296, and His-297.

It belongs to the class V-like SAM-binding methyltransferase superfamily. Histone-lysine methyltransferase family. SET7 subfamily.

The protein resides in the nucleus. It localises to the chromosome. It carries out the reaction L-lysyl(4)-[histone H3] + S-adenosyl-L-methionine = N(6)-methyl-L-lysyl(4)-[histone H3] + S-adenosyl-L-homocysteine + H(+). It catalyses the reaction L-lysyl-[protein] + S-adenosyl-L-methionine = N(6)-methyl-L-lysyl-[protein] + S-adenosyl-L-homocysteine + H(+). In terms of biological role, histone methyltransferase that specifically monomethylates 'Lys-4' of histone H3. H3 'Lys-4' methylation represents a specific tag for epigenetic transcriptional activation. Plays a central role in the transcriptional activation of genes. Also has methyltransferase activity toward non-histone proteins. The polypeptide is Histone-lysine N-methyltransferase SETD7 (setd7) (Danio rerio (Zebrafish)).